The primary structure comprises 176 residues: Cytochrome b (176 aa).

A run of 3 helical transmembrane segments spans residues F33–M53, W77–V98, and W113–L133. Heme b-binding residues include H83 and H97.

This sequence belongs to the cytochrome b family. The cytochrome bc1 complex contains 11 subunits: 3 respiratory subunits (MT-CYB, CYC1 and UQCRFS1), 2 core proteins (UQCRC1 and UQCRC2) and 6 low-molecular weight proteins (UQCRH/QCR6, UQCRB/QCR7, UQCRQ/QCR8, UQCR10/QCR9, UQCR11/QCR10 and a cleavage product of UQCRFS1). This cytochrome bc1 complex then forms a dimer. Requires heme b as cofactor.

It is found in the mitochondrion inner membrane. Functionally, component of the ubiquinol-cytochrome c reductase complex (complex III or cytochrome b-c1 complex) that is part of the mitochondrial respiratory chain. The b-c1 complex mediates electron transfer from ubiquinol to cytochrome c. Contributes to the generation of a proton gradient across the mitochondrial membrane that is then used for ATP synthesis. The polypeptide is Cytochrome b (MT-CYB) (Tomopeas ravum (Blunt-eared bat)).